Consider the following 398-residue polypeptide: Carbamoyl phosphate synthase small chain (398 aa).

Residues 1-207 (MIQTISSSRP…KGYGTNNVHN (207 aa)) form a CPSase region. L-glutamine is bound by residues serine 60, glycine 257, and glycine 259. One can recognise a Glutamine amidotransferase type-1 domain in the interval 209–397 (HIVAIDYGIK…CDLIMNHKKI (189 aa)). Cysteine 286 functions as the Nucleophile in the catalytic mechanism. The L-glutamine site is built by leucine 287, glutamine 290, asparagine 328, glycine 330, and phenylalanine 331. Residues histidine 370 and glutamate 372 contribute to the active site.

It belongs to the CarA family. In terms of assembly, composed of two chains; the small (or glutamine) chain promotes the hydrolysis of glutamine to ammonia, which is used by the large (or ammonia) chain to synthesize carbamoyl phosphate. Tetramer of heterodimers (alpha,beta)4.

It carries out the reaction hydrogencarbonate + L-glutamine + 2 ATP + H2O = carbamoyl phosphate + L-glutamate + 2 ADP + phosphate + 2 H(+). The catalysed reaction is L-glutamine + H2O = L-glutamate + NH4(+). It functions in the pathway amino-acid biosynthesis; L-arginine biosynthesis; carbamoyl phosphate from bicarbonate: step 1/1. Its pathway is pyrimidine metabolism; UMP biosynthesis via de novo pathway; (S)-dihydroorotate from bicarbonate: step 1/3. In terms of biological role, small subunit of the glutamine-dependent carbamoyl phosphate synthetase (CPSase). CPSase catalyzes the formation of carbamoyl phosphate from the ammonia moiety of glutamine, carbonate, and phosphate donated by ATP, constituting the first step of 2 biosynthetic pathways, one leading to arginine and/or urea and the other to pyrimidine nucleotides. The small subunit (glutamine amidotransferase) binds and cleaves glutamine to supply the large subunit with the substrate ammonia. The sequence is that of Carbamoyl phosphate synthase small chain from Bartonella tribocorum (strain CIP 105476 / IBS 506).